The following is a 345-amino-acid chain: Heat stress transcription factor A-4c (345 aa).

The DNA-binding element occupies 11–105 (LPPFLTKTYE…LMKNIHRRKP (95 aa)). The interval 119–185 (PLTESERRSM…SIVAYVSQVL (67 aa)) is hydrophobic repeat HR-A/B. The Nuclear localization signal signature appears at 199–203 (RRKRR). The AHA1 motif lies at 226-235 (LTFWENLVSE). A disordered region spans residues 240 to 329 (SGLQSSSMDH…NGNKIGNQRT (90 aa)). Over residues 274 to 283 (PPVTVTAPAP) the composition is skewed to low complexity. An AHA2 motif is present at residues 289-298 (DDFWEQCLTE). 2 stretches are compositionally biased toward polar residues: residues 296–308 (LTENPGSTEQQEV) and 317–329 (NDNNGNKIGNQRT).

The protein belongs to the HSF family. Class A subfamily. In terms of assembly, homotrimer. Exhibits temperature-dependent phosphorylation. Expressed in roots, seedlings and at lower levels in leaves.

It localises to the nucleus. In terms of biological role, transcriptional activator that specifically binds DNA sequence 5'-AGAAnnTTCT-3' known as heat shock promoter elements (HSE). May be involved in general response to auxin. The sequence is that of Heat stress transcription factor A-4c (HSFA4C) from Arabidopsis thaliana (Mouse-ear cress).